The chain runs to 149 residues: MADQLSEEQISEFKEAFSLFDKDGDGTITTKELGTVMRSLGQNPTEAELQDMINEVDADGNGTIDFPEFLTMMARKMRDTDSEEEIKEAFKVFDKDGNGYISAAELRHVMTNLGEKLTDNEVDEMIREADIDGDGQINYEEFVKMMLSK.

Alanine 2 is subject to N-acetylalanine. 4 consecutive EF-hand domains span residues 8–43 (EQISEFKEAFSLFDKDGDGTITTKELGTVMRSLGQN), 44–79 (PTEAELQDMINEVDADGNGTIDFPEFLTMMARKMRD), 81–116 (DSEEEIKEAFKVFDKDGNGYISAAELRHVMTNLGEK), and 117–149 (LTDNEVDEMIREADIDGDGQINYEEFVKMMLSK). Positions 21, 23, 25, 27, 32, 57, 59, 61, 63, 68, 94, 96, 98, 100, 105, 130, 132, 134, 136, and 141 each coordinate Ca(2+).

The protein belongs to the calmodulin family. In terms of processing, trimethylation of Lys-116 observed in other calmodulins is absent here.

Its function is as follows. Calmodulin mediates the control of a large number of enzymes, ion channels and other proteins by Ca(2+). Among the enzymes to be stimulated by the calmodulin-Ca(2+) complex are a number of protein kinases and phosphatases. The protein is Calmodulin (CMD1) of Pleurotus cornucopiae (Cornucopia mushroom).